We begin with the raw amino-acid sequence, 221 residues long: Translation initiation factor 6 (221 aa).

It belongs to the eIF-6 family.

Binds to the 50S ribosomal subunit and prevents its association with the 30S ribosomal subunit to form the 70S initiation complex. This is Translation initiation factor 6 from Methanopyrus kandleri (strain AV19 / DSM 6324 / JCM 9639 / NBRC 100938).